The primary structure comprises 386 residues: MAP kinase-activated protein kinase 2 (386 aa).

Residues 1 to 29 (MLSGSPGQTPPAPFPSPPPPAPAQPPPPF) are disordered. Residues 8 to 29 (QTPPAPFPSPPPPAPAQPPPPF) are compositionally biased toward pro residues. One can recognise a Protein kinase domain in the interval 50–311 (KVTSQVLGLG…ITEFMNHPWI (262 aa)). ATP contacts are provided by residues 56–64 (LGLGINGKV) and K79. Staurosporine is bound at residue 125 to 127 (ECL). Residue D172 is the Proton acceptor of the active site. Position 208 is a phosphothreonine; by MAPK14 (T208). A Phosphoserine; by MAPK14 modification is found at S258. S314 carries the post-translational modification Phosphoserine; by autocatalysis. The autoinhibitory helix stretch occupies residues 314–350 (STKVPQTPLHTSRVLKEDKERWEDVKEEMTSALATMR). Phosphothreonine; by MAPK14 is present on T320. 2 short sequence motifs (nuclear export signal (NES)) span residues 331 to 354 (DKERWEDVKEEMTSALATMRVDYE) and 342 to 351 (MTSALATMRV). K339 is covalently cross-linked (Glycyl lysine isopeptide (Lys-Gly) (interchain with G-Cter in SUMO)). Residues 352-376 (DYEQIKIKKIEDASNPLLLKRRKKA) form a p38 MAPK-binding site region. 2 short sequence motifs (bipartite nuclear localization signal) span residues 357-360 (KIKK) and 371-375 (KRRKK).

It belongs to the protein kinase superfamily. CAMK Ser/Thr protein kinase family. In terms of assembly, heterodimer with p38-alpha/MAPK14; this heterodimer forms a stable complex: molecules are positioned 'face to face' so that the ATP-binding sites of both kinases are at the heterodimer interface. Interacts with PHC2. Interacts with HSF1. In terms of processing, sumoylation inhibits the protein kinase activity. Post-translationally, phosphorylated and activated by MAP kinase p38-alpha/MAPK14 at Thr-208; Ser-258 and Thr-320. In terms of tissue distribution, ubiquitously expressed (at protein level).

The protein resides in the cytoplasm. It localises to the nucleus. The enzyme catalyses L-seryl-[protein] + ATP = O-phospho-L-seryl-[protein] + ADP + H(+). It carries out the reaction L-threonyl-[protein] + ATP = O-phospho-L-threonyl-[protein] + ADP + H(+). Activated following phosphorylation by p38-alpha/MAPK14 following various stresses. Inhibited following sumoylation. Specifically inhibited by pyrrolopyridine inhibitors. Functionally, stress-activated serine/threonine-protein kinase involved in cytokine production, endocytosis, reorganization of the cytoskeleton, cell migration, cell cycle control, chromatin remodeling, DNA damage response and transcriptional regulation. Following stress, it is phosphorylated and activated by MAP kinase p38-alpha/MAPK14, leading to phosphorylation of substrates. Phosphorylates serine in the peptide sequence, Hyd-X-R-X(2)-S, where Hyd is a large hydrophobic residue. Phosphorylates ALOX5, CDC25B, CDC25C, CEP131, ELAVL1, HNRNPA0, HSP27/HSPB1, KRT18, KRT20, LIMK1, LSP1, PABPC1, PARN, PDE4A, RCSD1, RPS6KA3, TAB3 and TTP/ZFP36. Phosphorylates HSF1; leading to the interaction with HSP90 proteins and inhibiting HSF1 homotrimerization, DNA-binding and transactivation activities. Mediates phosphorylation of HSP27/HSPB1 in response to stress, leading to dissociation of HSP27/HSPB1 from large small heat-shock protein (sHsps) oligomers and impairment of their chaperone activities and ability to protect against oxidative stress effectively. Involved in inflammatory response by regulating tumor necrosis factor (TNF) and IL6 production post-transcriptionally: acts by phosphorylating AU-rich elements (AREs)-binding proteins ELAVL1, HNRNPA0, PABPC1 and TTP/ZFP36, leading to regulation of the stability and translation of TNF and IL6 mRNAs. Phosphorylation of TTP/ZFP36, a major post-transcriptional regulator of TNF, promotes its binding to 14-3-3 proteins and reduces its ARE mRNA affinity leading to inhibition of dependent degradation of ARE-containing transcripts. Phosphorylates CEP131 in response to cellular stress following ultraviolet irradiation which promotes binding of CEP131 to 14-3-3 proteins and inhibits formation of novel centriolar satellites. Also involved in late G2/M checkpoint following DNA damage through a process of post-transcriptional mRNA stabilization: following DNA damage, relocalizes from nucleus to cytoplasm and phosphorylates HNRNPA0 and PARN, leading to stabilization of GADD45A mRNA. Involved in toll-like receptor signaling pathway (TLR) in dendritic cells: required for acute TLR-induced macropinocytosis by phosphorylating and activating RPS6KA3. The sequence is that of MAP kinase-activated protein kinase 2 (Mapkapk2) from Mus musculus (Mouse).